A 197-amino-acid polypeptide reads, in one-letter code: Probable chorismate pyruvate-lyase (197 aa).

Residues 1–14 (MRFDAADAHWRETP) are compositionally biased toward basic and acidic residues. A disordered region spans residues 1-25 (MRFDAADAHWRETPRPGASGAQKDW). Substrate-binding residues include Arg73, Leu111, and Glu173.

This sequence belongs to the UbiC family.

The protein resides in the cytoplasm. It catalyses the reaction chorismate = 4-hydroxybenzoate + pyruvate. The protein operates within cofactor biosynthesis; ubiquinone biosynthesis. Functionally, removes the pyruvyl group from chorismate, with concomitant aromatization of the ring, to provide 4-hydroxybenzoate (4HB) for the ubiquinone pathway. This chain is Probable chorismate pyruvate-lyase, found in Burkholderia thailandensis (strain ATCC 700388 / DSM 13276 / CCUG 48851 / CIP 106301 / E264).